A 148-amino-acid chain; its full sequence is Deoxyuridine 5'-triphosphate nucleotidohydrolase (148 aa).

Residues 68–70, Asn-81, and 85–87 each bind substrate; these read RSG and TID.

This sequence belongs to the dUTPase family. It depends on Mg(2+) as a cofactor.

It catalyses the reaction dUTP + H2O = dUMP + diphosphate + H(+). The protein operates within pyrimidine metabolism; dUMP biosynthesis; dUMP from dCTP (dUTP route): step 2/2. This enzyme is involved in nucleotide metabolism: it produces dUMP, the immediate precursor of thymidine nucleotides and it decreases the intracellular concentration of dUTP so that uracil cannot be incorporated into DNA. The sequence is that of Deoxyuridine 5'-triphosphate nucleotidohydrolase from Geobacter metallireducens (strain ATCC 53774 / DSM 7210 / GS-15).